Consider the following 264-residue polypeptide: uncharacterized protein (264 aa).

8–15 (IQGGTGKT) is a binding site for ATP.

This is an uncharacterized protein from Methanocaldococcus jannaschii (strain ATCC 43067 / DSM 2661 / JAL-1 / JCM 10045 / NBRC 100440) (Methanococcus jannaschii).